The following is a 33-amino-acid chain: U13-ctenitoxin-Pn1c (33 aa).

Cystine bridges form between C3/C17, C10/C21, and C16/C30.

As to expression, expressed by the venom gland.

The protein resides in the secreted. In terms of biological role, acts as a neurotoxin. This chain is U13-ctenitoxin-Pn1c, found in Phoneutria nigriventer (Brazilian armed spider).